The sequence spans 67 residues: MNNNNVYSLNNFDFLARSFARMQAEGRPVDIQAVTGNMDEEHRDWFCKRYALYCQQATQAKRLELEH.

Belongs to the GlgS family.

In terms of biological role, major determinant of cell surface composition. Negatively regulates motility, adhesion and synthesis of biofilm exopolysaccharides. This chain is Surface composition regulator, found in Salmonella enteritidis PT4 (strain P125109).